Consider the following 819-residue polypeptide: Molybdenum cofactor sulfurase (819 aa).

Lys271 bears the N6-(pyridoxal phosphate)lysine mark. Cys430 is a catalytic residue. Residues 650-817 (CKLLRYSSST…IGVGEEVNPD (168 aa)) form the MOSC domain.

The protein belongs to the class-V pyridoxal-phosphate-dependent aminotransferase family. MOCOS subfamily. Pyridoxal 5'-phosphate is required as a cofactor. In terms of tissue distribution, ubiquitously expressed.

The catalysed reaction is Mo-molybdopterin + L-cysteine + AH2 = thio-Mo-molybdopterin + L-alanine + A + H2O. It participates in cofactor biosynthesis; molybdopterin biosynthesis. In terms of biological role, sulfurates the molybdenum cofactor. Sulfation of molybdenum is essential for xanthine dehydrogenase (XDH) and aldehyde oxidase (ADO) enzymes in which molybdenum cofactor is liganded by 1 oxygen and 1 sulfur atom in active form. Modulates cold stress- and osmotic stress-responsive gene expression by acting as key regulator of abscisic acid (ABA) biosynthesis. The chain is Molybdenum cofactor sulfurase (ABA3) from Arabidopsis thaliana (Mouse-ear cress).